We begin with the raw amino-acid sequence, 526 residues long: Biotin carboxylase 2, chloroplastic (526 aa).

The N-terminal 71 residues, 1-71 (MEATLPVCKS…GVTCRAEKIL (71 aa)), are a transit peptide targeting the chloroplast. ATP contacts are provided by residues K181, 213 to 274 (ASEI…PRHI), K223, 229 to 230 (GG), 265 to 268 (EKYV), and H273. The ATP-grasp domain occupies 185–382 (RETMKKANVP…LIEEQIRVAM (198 aa)). K302 is a binding site for hydrogencarbonate. ATP contacts are provided by E340 and E353. Positions 340, 353, and 355 each coordinate Mg(2+). Residues E340, E353, and N355 each coordinate Mn(2+). The hydrogencarbonate site is built by R357, V360, and R403. R357 is an active-site residue. Biotin is bound at residue R403.

In terms of assembly, acetyl-CoA carboxylase is a heterohexamer composed of biotin carboxyl carrier protein, biotin carboxylase and two subunits each of ACCase subunit alpha and ACCase plastid-coded subunit beta (accD). Mg(2+) serves as cofactor. Mn(2+) is required as a cofactor.

The protein localises to the plastid. The protein resides in the chloroplast. It carries out the reaction N(6)-biotinyl-L-lysyl-[protein] + hydrogencarbonate + ATP = N(6)-carboxybiotinyl-L-lysyl-[protein] + ADP + phosphate + H(+). It participates in lipid metabolism; malonyl-CoA biosynthesis; malonyl-CoA from acetyl-CoA: step 1/1. Its function is as follows. This protein is a component of the acetyl coenzyme A carboxylase complex; first, biotin carboxylase catalyzes the carboxylation of the carrier protein and then the transcarboxylase transfers the carboxyl group to form malonyl-CoA. The protein is Biotin carboxylase 2, chloroplastic of Populus trichocarpa (Western balsam poplar).